The sequence spans 190 residues: Threonylcarbamoyl-AMP synthase (190 aa).

The YrdC-like domain occupies 7 to 190 (RAALSDVLQA…ALTGKQFRQG (184 aa)).

Belongs to the SUA5 family. TsaC subfamily.

The protein localises to the cytoplasm. The enzyme catalyses L-threonine + hydrogencarbonate + ATP = L-threonylcarbamoyladenylate + diphosphate + H2O. In terms of biological role, required for the formation of a threonylcarbamoyl group on adenosine at position 37 (t(6)A37) in tRNAs that read codons beginning with adenine. Catalyzes the conversion of L-threonine, HCO(3)(-)/CO(2) and ATP to give threonylcarbamoyl-AMP (TC-AMP) as the acyladenylate intermediate, with the release of diphosphate. The protein is Threonylcarbamoyl-AMP synthase of Yersinia enterocolitica serotype O:8 / biotype 1B (strain NCTC 13174 / 8081).